Consider the following 405-residue polypeptide: Envelope glycoprotein M (405 aa).

At 1–17 (MKSSKNDTFVYRTWFKT) the chain is on the intravirion side. The chain crosses the membrane as a helical span at residues 18–38 (LVVYFVMFVMSAVVPITAMFP). The Virion surface portion of the chain corresponds to 39–76 (NLGYPCYFNALVDYGALNLTNYNLAHHLTPTLYLEPPE). The chain crosses the membrane as a helical span at residues 77–97 (MFVYITLVFIADCVAFIYYAC). At 98-121 (GEVALIKARKKVSGLTDLSAWVSA) the chain is on the intravirion side. The helical transmembrane segment at 122 to 142 (VGSPTVLFLAILKLWSIQVFI) threads the bilayer. Topologically, residues 143–149 (QVLSYKH) are virion surface. A helical transmembrane segment spans residues 150-170 (VFLSAFVYFLHFLASVLHACA). At 171-192 (CVTRFSPVWVVKAQDNSIPQDT) the chain is on the intravirion side. A helical transmembrane segment spans residues 193–215 (FLWWVVFYLKPIVTNLYLGCLAL). Topologically, residues 216 to 245 (ETLVFSLSVFLALGNSFYFMVGDMVLGAVN) are virion surface. Residues 246-266 (LFLVLPIFWYILTEVWLASFL) traverse the membrane as a helical segment. Arg-267 is a topological domain (intravirion). Residues 268 to 288 (HNFGFYCGMFIASIILILPLV) form a helical membrane-spanning segment. At 289–299 (RYEAVFVSAKL) the chain is on the virion surface side. The helical transmembrane segment at 300–320 (HTTVAINVAIIPILCSVAMLI) threads the bilayer. The Intravirion segment spans residues 321–405 (RICRIFKSMR…TTDSEEEIFP (85 aa)). Positions 346–405 (LESEPRPRPSRTPSPGRNRRRSSTSSSSSRSTRRQRPVSTQALISSVLPMTTDSEEEIFP) are disordered. A compositionally biased stretch (polar residues) spans 386–397 (QALISSVLPMTT).

The protein belongs to the herpesviridae glycoprotein M family. Interacts (via N-terminus) with gN (via N-terminus). The gM-gN heterodimer forms the gCII complex.

The protein localises to the virion membrane. Its subcellular location is the host Golgi apparatus. It localises to the host trans-Golgi network. It is found in the host endosome membrane. The protein resides in the host nucleus inner membrane. In terms of biological role, envelope glycoprotein important for virion assembly and egress. Plays a role in the correct incorporation of gH-gL into virion membrane. Directs the glycoprotein N (gN) to the host trans-Golgi network. The polypeptide is Envelope glycoprotein M (Homo sapiens (Human)).